The primary structure comprises 659 residues: RNA-binding protein MIP6 (659 aa).

Residues 1–27 (MPNSHGNVLNNISLNSKQNPRSISKSC) show a composition bias toward polar residues. The interval 1–35 (MPNSHGNVLNNISLNSKQNPRSISKSCPNDKDARQ) is disordered. RRM domains follow at residues 111–189 (NSLF…PSMK), 199–267 (TNVF…GNKI), and 313–389 (KTIL…PGKD).

In terms of assembly, interacts with MEX67.

It is found in the cytoplasm. The sequence is that of RNA-binding protein MIP6 (MIP6) from Saccharomyces cerevisiae (strain ATCC 204508 / S288c) (Baker's yeast).